Reading from the N-terminus, the 508-residue chain is UBX domain-containing protein 4 (508 aa).

The segment at 1–200 (MLWFQGAIPA…PAEDLNIRVE (200 aa)) is interaction with UBQLN1. At 1 to 413 (MLWFQGAIPA…VHSSSGDIWT (413 aa)) the chain is on the cytoplasmic side. 2 stretches are compositionally biased toward polar residues: residues 117–151 (SETS…QSRN) and 160–187 (TSDT…SGCS). Residues 117–196 (SETSVANGSQ…SDQRPAEDLN (80 aa)) are disordered. One can recognise a UBX domain in the interval 315–393 (ERSTVARIQF…ELAPSASVVV (79 aa)). The stretch at 414–434 (LLGTVLYPFLAIWRLISNFLF) is an intramembrane region. At 435 to 508 (SNPPPTQTSV…TWNGNSTQQM (74 aa)) the chain is on the cytoplasmic side. The disordered stretch occupies residues 440–508 (TQTSVRVTSS…TWNGNSTQQM (69 aa)). Residues 441-458 (QTSVRVTSSEPPNPASSS) show a composition bias toward polar residues. Over residues 459–491 (KSEKREPVRKRVLEKRGDDFKKEGKIYRLRTQD) the composition is skewed to basic and acidic residues. A Phosphothreonine modification is found at threonine 489. Positions 498–508 (NTWNGNSTQQM) are enriched in polar residues.

In terms of assembly, directly interacts with VCP. Interacts with UBQLN1. Forms a complex with VCP and UBQLN1.

It localises to the endoplasmic reticulum membrane. The protein localises to the nucleus envelope. Functionally, involved in endoplasmic reticulum-associated protein degradation (ERAD). Acts as a platform to recruit both UBQLN1 and VCP to the ER during ERAD. The sequence is that of UBX domain-containing protein 4 (UBXN4) from Pongo abelii (Sumatran orangutan).